The primary structure comprises 346 residues: GTPase Obg (346 aa).

Residues 1-159 (MKFLDEAKVY…RWIWLRLKLI (159 aa)) enclose the Obg domain. Residues 160–327 (ADAGLVGLPN…ALRALVAVIG (168 aa)) form the OBG-type G domain. Residues 166–173 (GLPNAGKS), 191–195 (FTTLH), 212–215 (DIPG), 279–282 (NKID), and 308–310 (SAA) each bind GTP. Mg(2+) is bound by residues S173 and T193.

It belongs to the TRAFAC class OBG-HflX-like GTPase superfamily. OBG GTPase family. As to quaternary structure, monomer. The cofactor is Mg(2+).

It localises to the cytoplasm. Its function is as follows. An essential GTPase which binds GTP, GDP and possibly (p)ppGpp with moderate affinity, with high nucleotide exchange rates and a fairly low GTP hydrolysis rate. Plays a role in control of the cell cycle, stress response, ribosome biogenesis and in those bacteria that undergo differentiation, in morphogenesis control. In Bradyrhizobium diazoefficiens (strain JCM 10833 / BCRC 13528 / IAM 13628 / NBRC 14792 / USDA 110), this protein is GTPase Obg.